Reading from the N-terminus, the 61-residue chain is Putative antitoxin VapB13 (61 aa).

This sequence belongs to the UPF0165 family.

In terms of biological role, possibly the antitoxin component of a type II toxin-antitoxin (TA) system. Its cognate toxin is VapC13 (Potential). The protein is Putative antitoxin VapB13 (vapB13) of Archaeoglobus fulgidus (strain ATCC 49558 / DSM 4304 / JCM 9628 / NBRC 100126 / VC-16).